Here is a 382-residue protein sequence, read N- to C-terminus: Dual-specificity RNA methyltransferase RlmN (382 aa).

The Proton acceptor role is filled by glutamate 94. The Radical SAM core domain occupies 100-336 (EANRGTLCVS…NTITRKTRGD (237 aa)). A disulfide bridge links cysteine 107 with cysteine 342. Residues cysteine 114, cysteine 118, and cysteine 121 each coordinate [4Fe-4S] cluster. S-adenosyl-L-methionine contacts are provided by residues 168 to 169 (GE), serine 200, 222 to 224 (SLH), and asparagine 299. Cysteine 342 acts as the S-methylcysteine intermediate in catalysis.

This sequence belongs to the radical SAM superfamily. RlmN family. Requires [4Fe-4S] cluster as cofactor.

Its subcellular location is the cytoplasm. The catalysed reaction is adenosine(2503) in 23S rRNA + 2 reduced [2Fe-2S]-[ferredoxin] + 2 S-adenosyl-L-methionine = 2-methyladenosine(2503) in 23S rRNA + 5'-deoxyadenosine + L-methionine + 2 oxidized [2Fe-2S]-[ferredoxin] + S-adenosyl-L-homocysteine. It catalyses the reaction adenosine(37) in tRNA + 2 reduced [2Fe-2S]-[ferredoxin] + 2 S-adenosyl-L-methionine = 2-methyladenosine(37) in tRNA + 5'-deoxyadenosine + L-methionine + 2 oxidized [2Fe-2S]-[ferredoxin] + S-adenosyl-L-homocysteine. In terms of biological role, specifically methylates position 2 of adenine 2503 in 23S rRNA and position 2 of adenine 37 in tRNAs. m2A2503 modification seems to play a crucial role in the proofreading step occurring at the peptidyl transferase center and thus would serve to optimize ribosomal fidelity. This chain is Dual-specificity RNA methyltransferase RlmN, found in Legionella pneumophila (strain Paris).